Here is a 342-residue protein sequence, read N- to C-terminus: MSLHGKRKEIYKYEAPWTVYAMNWSVRPDKRFRLALGSFVEEYNNKVQLVGLDEESSEFICRNTFDHPYPTTKLMWIPDTKGVYPDLLATSGDYLRVWRVGETETRLECLLNNNKNSDFCAPLTSFDWNEVDPYLLGTSSIDTTCTIWGLETGQVLGRVNLVSGHVKTQLIAHDKEVYDIAFSRAGGGRDMFASVGADGSVRMFDLRHLEHSTIIYEDPQHHPLLRLCWNKQDPNYLATMAMDGMEVVILDVRVPCTPVARLNNHRACVNGIAWAPHSSCHICTAADDHQALIWDIQQMPRAIEDPILAYTAEGEINNVQWASTQPDWIAICYNNCLEILRV.

7 WD repeats span residues 6–52, 60–100, 108–150, 165–206, 213–252, 257–296, and 303–342; these read KRKE…LVGL, ICRN…VWRV, ECLL…IWGL, HVKT…MFDL, TIIY…ILDV, TPVA…IWDI, and IEDP…ILRV.

It belongs to the WD repeat DCAF7 family. Interacts with DYRK1A, DYRK1B and DIAPH1. Interacts with DDB1. Interacts with ZNF703. Interacts with human adenovirus 5 E1A protein.

It is found in the cytoplasm. The protein localises to the nucleus. The protein operates within protein modification; protein ubiquitination. Involved in craniofacial development. Acts upstream of the EDN1 pathway and is required for formation of the upper jaw equivalent, the palatoquadrate. The activity required for EDN1 pathway function differs between the first and second arches. Associates with DIAPH1 and controls GLI1 transcriptional activity. Could be involved in normal and disease skin development. May function as a substrate receptor for CUL4-DDB1 E3 ubiquitin-protein ligase complex. This chain is DDB1- and CUL4-associated factor 7 (DCAF7), found in Homo sapiens (Human).